A 463-amino-acid chain; its full sequence is Cysteine--tRNA ligase (463 aa).

Cys27 serves as a coordination point for Zn(2+). A 'HIGH' region motif is present at residues 29–39 (MTVYDYCHLGH). Zn(2+) contacts are provided by Cys208, His233, and Glu237. The 'KMSKS' region motif lies at 265–269 (KMSKS). Residue Lys268 coordinates ATP.

This sequence belongs to the class-I aminoacyl-tRNA synthetase family. Monomer. Requires Zn(2+) as cofactor.

It is found in the cytoplasm. It catalyses the reaction tRNA(Cys) + L-cysteine + ATP = L-cysteinyl-tRNA(Cys) + AMP + diphosphate. The chain is Cysteine--tRNA ligase from Marinobacter nauticus (strain ATCC 700491 / DSM 11845 / VT8) (Marinobacter aquaeolei).